Consider the following 1343-residue polypeptide: DNA-directed RNA polymerase subunit beta (1343 aa).

Belongs to the RNA polymerase beta chain family. In terms of assembly, the RNAP catalytic core consists of 2 alpha, 1 beta, 1 beta' and 1 omega subunit. When a sigma factor is associated with the core the holoenzyme is formed, which can initiate transcription.

It carries out the reaction RNA(n) + a ribonucleoside 5'-triphosphate = RNA(n+1) + diphosphate. Functionally, DNA-dependent RNA polymerase catalyzes the transcription of DNA into RNA using the four ribonucleoside triphosphates as substrates. This Haemophilus influenzae (strain ATCC 51907 / DSM 11121 / KW20 / Rd) protein is DNA-directed RNA polymerase subunit beta.